The primary structure comprises 498 residues: 3-octaprenyl-4-hydroxybenzoate carboxy-lyase (498 aa).

Asn-176 is a binding site for Mn(2+). Residues 179-181 (IYR), 193-195 (RWL), and 198-199 (RG) each bind prenylated FMN. Residue Glu-242 coordinates Mn(2+). Asp-291 serves as the catalytic Proton donor.

It belongs to the UbiD family. Homohexamer. It depends on prenylated FMN as a cofactor. Mn(2+) serves as cofactor.

The protein localises to the cell membrane. The enzyme catalyses a 4-hydroxy-3-(all-trans-polyprenyl)benzoate + H(+) = a 2-(all-trans-polyprenyl)phenol + CO2. It functions in the pathway cofactor biosynthesis; ubiquinone biosynthesis. Its function is as follows. Catalyzes the decarboxylation of 3-octaprenyl-4-hydroxy benzoate to 2-octaprenylphenol, an intermediate step in ubiquinone biosynthesis. This chain is 3-octaprenyl-4-hydroxybenzoate carboxy-lyase, found in Escherichia coli O6:K15:H31 (strain 536 / UPEC).